A 228-amino-acid chain; its full sequence is Prepilin leader peptidase/N-methyltransferase (228 aa).

Helical transmembrane passes span 18–38 (LWGSFLFLSGLAFGSFFNVVI), 95–115 (RYPLMELATGALFVLAGYLMA), 116–136 (PGVPLLGGLILLSLLLILAAI), 147–167 (LTLPLMWAGLLFNLSATYVPL), 168–188 (AEAVVGAMAGYLSLWSVYWVF), and 204–224 (LLAALGAWLGWQALPQTLLLA).

Belongs to the peptidase A24 family.

The protein localises to the cell inner membrane. The catalysed reaction is Typically cleaves a -Gly-|-Phe- bond to release an N-terminal, basic peptide of 5-8 residues from type IV prepilin, and then N-methylates the new N-terminal amino group, the methyl donor being S-adenosyl-L-methionine.. Functionally, plays an essential role in type IV pili and type II pseudopili formation by proteolytically removing the leader sequence from substrate proteins and subsequently monomethylating the alpha-amino group of the newly exposed N-terminal phenylalanine. This Klebsiella pneumoniae protein is Prepilin leader peptidase/N-methyltransferase (pulO).